The sequence spans 490 residues: GTPase Der (490 aa).

EngA-type G domains follow at residues 3–167 (FTLA…DAFE) and 203–378 (LQVA…EVWN). GTP contacts are provided by residues 9 to 16 (GRPNVGKS), 56 to 60 (DTAGL), 119 to 122 (NKAE), 209 to 216 (GRPNAGKS), 256 to 260 (DTAGM), and 321 to 324 (NKWD). The KH-like domain occupies 379–465 (RRVPTAALNR…RLTMRSQSDA (87 aa)). Residues 451 to 490 (PGTPIRLTMRSQSDANPYKNRKKSTPSRLRKHLGKPSLKG) form a disordered region. Over residues 469 to 484 (KNRKKSTPSRLRKHLG) the composition is skewed to basic residues.

This sequence belongs to the TRAFAC class TrmE-Era-EngA-EngB-Septin-like GTPase superfamily. EngA (Der) GTPase family. Associates with the 50S ribosomal subunit.

GTPase that plays an essential role in the late steps of ribosome biogenesis. The polypeptide is GTPase Der (Dinoroseobacter shibae (strain DSM 16493 / NCIMB 14021 / DFL 12)).